The primary structure comprises 487 residues: Protein nucleotidyltransferase YdiU (487 aa).

Residues glycine 92, arginine 95, lysine 106, aspartate 118, glycine 119, arginine 169, and arginine 176 each contribute to the ATP site. Catalysis depends on aspartate 253, which acts as the Proton acceptor. Residues asparagine 254 and aspartate 263 each contribute to the Mg(2+) site. ATP is bound at residue aspartate 263.

This sequence belongs to the SELO family. Mg(2+) serves as cofactor. Requires Mn(2+) as cofactor.

The enzyme catalyses L-seryl-[protein] + ATP = 3-O-(5'-adenylyl)-L-seryl-[protein] + diphosphate. The catalysed reaction is L-threonyl-[protein] + ATP = 3-O-(5'-adenylyl)-L-threonyl-[protein] + diphosphate. It catalyses the reaction L-tyrosyl-[protein] + ATP = O-(5'-adenylyl)-L-tyrosyl-[protein] + diphosphate. It carries out the reaction L-histidyl-[protein] + UTP = N(tele)-(5'-uridylyl)-L-histidyl-[protein] + diphosphate. The enzyme catalyses L-seryl-[protein] + UTP = O-(5'-uridylyl)-L-seryl-[protein] + diphosphate. The catalysed reaction is L-tyrosyl-[protein] + UTP = O-(5'-uridylyl)-L-tyrosyl-[protein] + diphosphate. In terms of biological role, nucleotidyltransferase involved in the post-translational modification of proteins. It can catalyze the addition of adenosine monophosphate (AMP) or uridine monophosphate (UMP) to a protein, resulting in modifications known as AMPylation and UMPylation. The chain is Protein nucleotidyltransferase YdiU from Bordetella pertussis (strain Tohama I / ATCC BAA-589 / NCTC 13251).